Reading from the N-terminus, the 251-residue chain is Putative fatty acid elongase DDB_G0274669 (251 aa).

5 consecutive transmembrane segments (helical) span residues 51-71, 82-102, 135-155, 177-197, and 211-231; these read FQII…IKFL, FISI…CVGV, WSYI…IIVL, YITM…VLHV, and AFAA…KFFV.

This sequence belongs to the ELO family.

Its subcellular location is the membrane. The catalysed reaction is a very-long-chain acyl-CoA + malonyl-CoA + H(+) = a very-long-chain 3-oxoacyl-CoA + CO2 + CoA. Its function is as follows. Could be implicated in synthesis of very long chain fatty acids. The protein is Putative fatty acid elongase DDB_G0274669 of Dictyostelium discoideum (Social amoeba).